Consider the following 22-residue polypeptide: MNLLVKCAGKIPALALTWTCRP.

The protein is Protein YncP of Escherichia coli (strain K12).